The primary structure comprises 160 residues: Probable chemoreceptor glutamine deamidase CheD (160 aa).

The protein belongs to the CheD family.

It carries out the reaction L-glutaminyl-[protein] + H2O = L-glutamyl-[protein] + NH4(+). Functionally, probably deamidates glutamine residues to glutamate on methyl-accepting chemotaxis receptors (MCPs), playing an important role in chemotaxis. The sequence is that of Probable chemoreceptor glutamine deamidase CheD from Desulfitobacterium hafniense (strain DSM 10664 / DCB-2).